We begin with the raw amino-acid sequence, 269 residues long: Myelin protein zero-like protein 1 (269 aa).

The signal sequence occupies residues 1 to 35 (MAAPAGAGALIASPDRRRCLWSVLAAALGLLTYGV). In terms of domain architecture, Ig-like V-type spans 36 to 146 (SALEVYTPKE…VKNPPDIVVQ (111 aa)). Residues 36-162 (SALEVYTPKE…YVVEKEILPA (127 aa)) are Extracellular-facing. Residues Asn50, Asn64, and Asn130 are each glycosylated (N-linked (GlcNAc...) asparagine). Cys58 and Cys135 are oxidised to a cystine. The helical transmembrane segment at 163 to 183 (FPVWVVVGIVTAVVLGLTLLI) threads the bilayer. The Cytoplasmic portion of the chain corresponds to 184-269 (TMILAVIYRR…SVVYADIRKN (86 aa)). The tract at residues 202–238 (GCNTSENVSPVKQVSRKSPSDTEGLVKSLPSGSHQGP) is disordered. Residues 203–213 (CNTSENVSPVK) show a composition bias toward polar residues. Phosphoserine occurs at positions 206, 210, 219, and 221. Positions 239 to 244 (VIYAQL) match the ITIM motif 1 motif. Position 241 is a phosphotyrosine (Tyr241). Ser260 is modified (phosphoserine). Positions 261-266 (VVYADI) match the ITIM motif 2 motif. At Tyr263 the chain carries Phosphotyrosine.

It belongs to the myelin P0 protein family. As to quaternary structure, interacts with phosphorylated PTPN11/SHP-2. In terms of processing, phosphorylated on tyrosine residues upon stimulation with pervanadate and concanavalin-A (ConA). Phosphorylation at Tyr-241 and Tyr-263 is required for interaction with PTPN11/SHP-2. Dephosphorylated by PTPN11/SHP-2 (in vitro). N-glycosylated.

The protein resides in the membrane. In terms of biological role, cell surface receptor, which is involved in signal transduction processes. Recruits PTPN11/SHP-2 to the cell membrane and is a putative substrate of PTPN11/SHP-2. Is a major receptor for concanavalin-A (ConA) and is involved in cellular signaling induced by ConA, which probably includes Src family tyrosine-protein kinases. May be involved in regulation of integrin-mediated cell motility. The sequence is that of Myelin protein zero-like protein 1 (MPZL1) from Bos taurus (Bovine).